The following is a 357-amino-acid chain: Norreticuline-7-O-methyltransferase (357 aa).

Asp225 is an S-adenosyl-L-methionine binding site. Catalysis depends on His263, which acts as the Proton acceptor.

It belongs to the class I-like SAM-binding methyltransferase superfamily. Cation-independent O-methyltransferase family. As to expression, expressed instems, leaves, roots and seedlings.

Functionally, involved in the biosynthesis of benzylisoquinoline alkaloids. Catalyzes specifically the methylation of norreticuline at position seven to produce norlaudanine. No activity with norcoclaurine, reticuline, norlaudanosoline, norisoorientaline, scoulerine, salutaridinol, oripavine, salsolinol, codeine or morphine. Involved in papaverine biosynthesis. This Papaver somniferum (Opium poppy) protein is Norreticuline-7-O-methyltransferase.